Here is a 477-residue protein sequence, read N- to C-terminus: Trigger factor (477 aa).

Residues 169–254 (EDRVTIDYLG…VKEVAKPNEL (86 aa)) enclose the PPIase FKBP-type domain. Residues 435–477 (VSKEELTAEDEDAASEAKPAKKAAPKKKAAPKKKADEGKSEEA) form a disordered region. Residues 454 to 466 (AKKAAPKKKAAPK) are compositionally biased toward basic residues. The segment covering 467-477 (KKADEGKSEEA) has biased composition (basic and acidic residues).

This sequence belongs to the FKBP-type PPIase family. Tig subfamily.

The protein resides in the cytoplasm. The catalysed reaction is [protein]-peptidylproline (omega=180) = [protein]-peptidylproline (omega=0). In terms of biological role, involved in protein export. Acts as a chaperone by maintaining the newly synthesized protein in an open conformation. Functions as a peptidyl-prolyl cis-trans isomerase. In Brucella anthropi (strain ATCC 49188 / DSM 6882 / CCUG 24695 / JCM 21032 / LMG 3331 / NBRC 15819 / NCTC 12168 / Alc 37) (Ochrobactrum anthropi), this protein is Trigger factor.